The following is a 166-amino-acid chain: Small ribosomal subunit protein uS5 (166 aa).

Residues 11–74 (LNEKLIAVNR…EKARRNMFTI (64 aa)) enclose the S5 DRBM domain.

This sequence belongs to the universal ribosomal protein uS5 family. In terms of assembly, part of the 30S ribosomal subunit. Contacts proteins S4 and S8.

Its function is as follows. With S4 and S12 plays an important role in translational accuracy. In terms of biological role, located at the back of the 30S subunit body where it stabilizes the conformation of the head with respect to the body. The protein is Small ribosomal subunit protein uS5 of Aliivibrio fischeri (strain ATCC 700601 / ES114) (Vibrio fischeri).